Consider the following 163-residue polypeptide: ATP synthase subunit b (163 aa).

The propeptide occupies 1–11; sequence MLWKANVWVLG. The chain crosses the membrane as a helical span at residues 16 to 36; sequence GISGGTIIYQLLMFIILLALL.

It belongs to the ATPase B chain family. As to quaternary structure, F-type ATPases have 2 components, F(1) - the catalytic core - and F(0) - the membrane proton channel. F(1) has five subunits: alpha(3), beta(3), gamma(1), delta(1), epsilon(1). F(0) has three main subunits: a(1), b(2) and c(10-14). The alpha and beta chains form an alternating ring which encloses part of the gamma chain. F(1) is attached to F(0) by a central stalk formed by the gamma and epsilon chains, while a peripheral stalk is formed by the delta and b chains.

It localises to the cell membrane. Functionally, f(1)F(0) ATP synthase produces ATP from ADP in the presence of a proton or sodium gradient. F-type ATPases consist of two structural domains, F(1) containing the extramembraneous catalytic core and F(0) containing the membrane proton channel, linked together by a central stalk and a peripheral stalk. During catalysis, ATP synthesis in the catalytic domain of F(1) is coupled via a rotary mechanism of the central stalk subunits to proton translocation. Its function is as follows. Component of the F(0) channel, it forms part of the peripheral stalk, linking F(1) to F(0). The polypeptide is ATP synthase subunit b (Bacillus sp. (strain PS3)).